Reading from the N-terminus, the 241-residue chain is 3-oxoacyl-[acyl-carrier-protein] reductase FabG (241 aa).

NADP(+) is bound by residues 13-16 (GASG), Ser38, 57-58 (EV), and Asn83. Ser135 is a substrate binding site. Residue Tyr148 is the Proton acceptor of the active site. NADP(+)-binding positions include 148–152 (YCASK) and Ile181.

Belongs to the short-chain dehydrogenases/reductases (SDR) family. As to quaternary structure, homotetramer.

It catalyses the reaction a (3R)-hydroxyacyl-[ACP] + NADP(+) = a 3-oxoacyl-[ACP] + NADPH + H(+). It participates in lipid metabolism; fatty acid biosynthesis. Catalyzes the NADPH-dependent reduction of beta-ketoacyl-ACP substrates to beta-hydroxyacyl-ACP products, the first reductive step in the elongation cycle of fatty acid biosynthesis. This is 3-oxoacyl-[acyl-carrier-protein] reductase FabG (fabG) from Rickettsia conorii (strain ATCC VR-613 / Malish 7).